Here is a 205-residue protein sequence, read N- to C-terminus: Putative 3-methyladenine DNA glycosylase (205 aa).

It belongs to the DNA glycosylase MPG family.

The polypeptide is Putative 3-methyladenine DNA glycosylase (Bacillus cereus (strain ATCC 14579 / DSM 31 / CCUG 7414 / JCM 2152 / NBRC 15305 / NCIMB 9373 / NCTC 2599 / NRRL B-3711)).